A 285-amino-acid chain; its full sequence is MVKELRERTGLGMMECKKALVEADGDIEKAIDDMRKSGQAKAAKKAGRTAAEGGVVVATNDANTVAVMVEINSETDFVARDDNFLGFCDKVAAAALSAGETDVAKIGELKLEDGSTVEEARQALVQKIGENIQIRRAAKLEAEGAIGAYVHGGRIGVLIALKGGDAELGKDVAMHVAAVNPMVVSGDQVPADVLEKEKEIIRAQPDMEGKPAEIVEKMLGGRINKFLKEVSLLDQPFVKDPNTTVGALVKAAGAEVASFERLVVGEGIEKEEVDFAAEVEAAAKG.

Residues Thr75 to Val78 form an involved in Mg(2+) ion dislocation from EF-Tu region.

It belongs to the EF-Ts family.

Its subcellular location is the cytoplasm. Its function is as follows. Associates with the EF-Tu.GDP complex and induces the exchange of GDP to GTP. It remains bound to the aminoacyl-tRNA.EF-Tu.GTP complex up to the GTP hydrolysis stage on the ribosome. The sequence is that of Elongation factor Ts from Alcanivorax borkumensis (strain ATCC 700651 / DSM 11573 / NCIMB 13689 / SK2).